The chain runs to 620 residues: 1-deoxy-D-xylulose-5-phosphate synthase (620 aa).

Residues histidine 80 and glycine 121–serine 123 each bind thiamine diphosphate. Position 152 (aspartate 152) interacts with Mg(2+). Thiamine diphosphate-binding positions include glycine 153–alanine 154, asparagine 181, tyrosine 288, and glutamate 370. Asparagine 181 lines the Mg(2+) pocket.

Belongs to the transketolase family. DXPS subfamily. As to quaternary structure, homodimer. It depends on Mg(2+) as a cofactor. Thiamine diphosphate serves as cofactor.

It catalyses the reaction D-glyceraldehyde 3-phosphate + pyruvate + H(+) = 1-deoxy-D-xylulose 5-phosphate + CO2. The protein operates within metabolic intermediate biosynthesis; 1-deoxy-D-xylulose 5-phosphate biosynthesis; 1-deoxy-D-xylulose 5-phosphate from D-glyceraldehyde 3-phosphate and pyruvate: step 1/1. In terms of biological role, catalyzes the acyloin condensation reaction between C atoms 2 and 3 of pyruvate and glyceraldehyde 3-phosphate to yield 1-deoxy-D-xylulose-5-phosphate (DXP). This is 1-deoxy-D-xylulose-5-phosphate synthase from Salmonella heidelberg (strain SL476).